A 905-amino-acid polypeptide reads, in one-letter code: Tight junction protein ZO-3 (905 aa).

The 83-residue stretch at 11–93 folds into the PDZ 1 domain; sequence TATLYKDPRR…TANVTVKRPR (83 aa). The tract at residues 92 to 167 is disordered; sequence PRRVQLPATK…GGGSEANGLD (76 aa). 2 positions are modified to phosphoserine: serine 111 and serine 128. A compositionally biased stretch (low complexity) spans 124–133; the sequence is GDSSSGSGRS. Residues 139-155 are compositionally biased toward basic residues; sequence RRSRAGRRGRVGSHGRR. 5 positions are modified to phosphoserine: serine 156, serine 157, serine 161, serine 195, and serine 311. A PDZ 2 domain is found at 187–264; it reads SVLVKRRNSE…ELTLLVLRDS (78 aa). A disordered region spans residues 289–367; it reads LTSELSQAPP…QSLEDRGYSP (79 aa). Residue threonine 317 is modified to Phosphothreonine. A phosphoserine mark is found at serine 319, serine 343, and serine 359. In terms of domain architecture, PDZ 3 spans 368-434; it reads DTRVVSFPKG…LTREEAVQFL (67 aa). In terms of domain architecture, SH3 spans 464 to 541; that stretch reads GDSFYIRTHF…PNQSRAEQLA (78 aa). The Guanylate kinase-like domain maps to 573–754; the sequence is RRGTKKASTQ…WYQEVKAVIQ (182 aa). Position 584 is a phosphoserine (serine 584). Disordered stretches follow at residues 773-818 and 850-905; these read EDLD…PQDV and TDKW…ATDL. Residues 851 to 877 show a composition bias toward basic and acidic residues; the sequence is DKWETQADSHYTQDQRRQDSMRTYKHE. Phosphoserine occurs at positions 891 and 892.

This sequence belongs to the MAGUK family. As to quaternary structure, interacts with occludin OCLN, claudins and TPJ1. Interacts with PATJ. Interacts with UBN1. Interacts with FASLG. Interacts with CCND1. In terms of processing, phosphorylated. In terms of tissue distribution, is concentrated in various types of epithelium, in tissues such as the lung, liver and kidney, but not in endothelium or at cadherin-based cell-cell adhesion sites.

It is found in the cell membrane. It localises to the cell junction. Its subcellular location is the tight junction. The protein resides in the nucleus. In terms of biological role, tjp1, Tjp2, and Tjp3 are closely related scaffolding proteins that link tight junction (TJ) transmembrane proteins such as claudins, junctional adhesion molecules, and occludin to the actin cytoskeleton. The tight junction acts to limit movement of substances through the paracellular space and as a boundary between the compositionally distinct apical and basolateral plasma membrane domains of epithelial and endothelial cells. Binds and recruits PatJ to tight junctions where it connects and stabilizes apical and lateral components of tight junctions. Promotes cell-cycle progression through the sequestration of cyclin D1 (Ccnd1) at tight junctions during mitosis which prevents Ccnd1 degradation during M-phase and enables S-phase transition. With Tjp1 and Tjp2, participates in the junctional retention and stability of the transcription factor DbpA, but is not involved in its shuttling to the nucleus. Contrary to Tjp2, Tjp3 is dispensable for individual viability, embryonic development, epithelial differentiation, and the establishment of TJs, at least in the laboratory environment. This is Tight junction protein ZO-3 (Tjp3) from Mus musculus (Mouse).